Reading from the N-terminus, the 443-residue chain is D(2) dopamine receptor (443 aa).

Residues 1-37 (MDPLNLSWYDDDPESRNWSRPFNGSEGKVGKPHYNYY) lie on the Extracellular side of the membrane. N-linked (GlcNAc...) asparagine glycosylation is found at asparagine 5, asparagine 17, and asparagine 23. Residues 38 to 60 (AMLLTLLIFVIVFGNVLVCMAVS) form a helical membrane-spanning segment. At 61-70 (REKALQTTTN) the chain is on the cytoplasmic side. A helical transmembrane segment spans residues 71 to 93 (YLIVSLAVADLLVATLVMPWVVY). Residues 94–108 (LEVVGEWKFSRIHCD) are Extracellular-facing. An intrachain disulfide couples cysteine 107 to cysteine 182. The helical transmembrane segment at 109-130 (IFVTLDVMMCTASILNLCAISI) threads the bilayer. Topologically, residues 131-151 (DRYTAVAMPMLYNTRYSSKRR) are cytoplasmic. A helical transmembrane segment spans residues 152 to 172 (VTVMIAIVWVLSFTISCPLLF). The Extracellular segment spans residues 173–188 (GLNNTDQNECIIANPA). Residues 189-213 (FVVYSSVVSFYVPFIVTLLVYIKIY) traverse the membrane as a helical segment. Positions 211–373 (KIYIVLRRRR…SQQKEKKATQ (163 aa)) are interaction with PPP1R9B. Residues 214–373 (IVLRRRRKRV…SQQKEKKATQ (160 aa)) are Cytoplasmic-facing. Residues 282-331 (EMLSSTSPPERTRYSPIPPSHHQLTLPDPSHHGLHSTANSPVKPEKNGHA) are disordered. Residues 374–395 (MLAIVLGVFIICWLPFFITHIL) form a helical membrane-spanning segment. Residues 396 to 409 (NIHCDCNIPPVLYS) are Extracellular-facing. Cysteine 399 and cysteine 401 form a disulfide bridge. Residues 410-431 (AFTWLGYVNSAVNPIIYTTFNV) traverse the membrane as a helical segment. At 432–443 (EFRKAFMKILHC) the chain is on the cytoplasmic side. A lipid anchor (S-palmitoyl cysteine) is attached at cysteine 443.

The protein belongs to the G-protein coupled receptor 1 family. In terms of assembly, forms homo- and heterooligomers with DRD4. The interaction with DRD4 may modulate agonist-induced downstream signaling. Interacts with CADPS and CADPS2. Interacts with GPRASP1, PPP1R9B and CLIC6. Interacts with ARRB2. Interacts with HTR2A. Interacts with DRD1. Interacts with KCNA2. Post-translationally, palmitoylated. Palmitoylation which is required for proper localization to the plasma membrane and stability of the receptor could be carried on by ZDHHC4, ZDHHC3 and ZDHHC8.

Its subcellular location is the cell membrane. It localises to the golgi apparatus membrane. Its function is as follows. Dopamine receptor whose activity is mediated by G proteins which inhibit adenylyl cyclase. Positively regulates postnatal regression of retinal hyaloid vessels via suppression of VEGFR2/KDR activity, downstream of OPN5. The chain is D(2) dopamine receptor (DRD2) from Mustela putorius furo (European domestic ferret).